The chain runs to 376 residues: Erythronate-4-phosphate dehydrogenase (376 aa).

Positions 45 and 67 each coordinate substrate. Residue Asp147 coordinates NAD(+). Arg209 is a catalytic residue. Asp233 serves as a coordination point for NAD(+). Glu238 is a catalytic residue. His255 (proton donor) is an active-site residue. NAD(+) is bound at residue Gly258. Substrate is bound at residue Tyr259.

It belongs to the D-isomer specific 2-hydroxyacid dehydrogenase family. PdxB subfamily. In terms of assembly, homodimer.

The protein localises to the cytoplasm. The catalysed reaction is 4-phospho-D-erythronate + NAD(+) = (R)-3-hydroxy-2-oxo-4-phosphooxybutanoate + NADH + H(+). It functions in the pathway cofactor biosynthesis; pyridoxine 5'-phosphate biosynthesis; pyridoxine 5'-phosphate from D-erythrose 4-phosphate: step 2/5. Functionally, catalyzes the oxidation of erythronate-4-phosphate to 3-hydroxy-2-oxo-4-phosphonooxybutanoate. This chain is Erythronate-4-phosphate dehydrogenase, found in Shewanella baltica (strain OS185).